The primary structure comprises 836 residues: Protein O-mannosyl-transferase tmtc2 (836 aa).

The chain crosses the membrane as a helical span at residues 1-21 (MIAELLSSALGLLLYLNTLGA). The Extracellular segment spans residues 22–77 (DFCYDDSRAIKTNQDLLPETPWNHIFFNDFWGTLLTHSGSHKSYRPLCTLSFRLNY). A helical transmembrane segment spans residues 78 to 98 (LFGGLDPWNYHLVNVLLHSAV). Over 99 to 107 (TGLFTNLCK) the chain is Cytoplasmic. The chain crosses the membrane as a helical span at residues 108–128 (ALFGSGCWTLIAGLLFASHPI). Residues 129 to 132 (HTEA) are Extracellular-facing. Residues 133–153 (VSGIVGRADVGSGLFFLLSLL) traverse the membrane as a helical segment. Residues 154 to 164 (CYMKHCSTRGY) are Cytoplasmic-facing. A helical transmembrane segment spans residues 165–185 (SLSSWCWILCAGFWAACSMLW). At 186–188 (KEQ) the chain is on the extracellular side. The helical transmembrane segment at 189–209 (GVTVLAVSAVYDVFVFHKLKM) threads the bilayer. The Cytoplasmic segment spans residues 210–220 (NQIISVVFKEK). A helical membrane pass occupies residues 221–241 (NVSFFFSVGLLFAWGVILLGA). The Extracellular segment spans residues 242 to 312 (RFYWMGNTPP…KTITDWRNIH (71 aa)). The chain crosses the membrane as a helical span at residues 313–333 (TVAFYILLILLAYSSLKGSAI). Residues 334–392 (KRDCNGKVFMNGKQNTNGHSCQSDLEHKNAEQNPVIASKLENGVKHHNSHEMQLPSTEN) are Cytoplasmic-facing. The chain crosses the membrane as a helical span at residues 393–413 (IVVLALSLLIVPFVPASNLFF). A topological domain (extracellular) is located at residue Tyr414. A helical membrane pass occupies residues 415-435 (VGFVIAERVLYIPSMGFCLLV). Residues 436-449 (TVGARALYIKAQKN) are Cytoplasmic-facing. Residues 450–470 (ILKNLLFYATAALIVFYGLKT) traverse the membrane as a helical segment. Residues 471–836 (VVRNGDWKNE…EKQGLKNSKT (366 aa)) are Extracellular-facing. TPR repeat units follow at residues 493 to 526 (AKAWGNLGNVLKSQSKIDEAENAYRNALYYRSNM), 527 to 560 (ADMLYNLGLLLQENSKFSEALHYYKLAIGSRPTL), 561 to 594 (ASGYLNTGIILMNQGRTEEARRTFLKCSEIPDEN), 606 to 639 (TSCLYNLGKLYHEQGQYEDALIVYKEAIQKMPRQ), 643 to 676 (QSLYNMMGEAYMRLNVVSEAEHWYTESLKSKPDH), 677 to 710 (IPAHLTYGKLLTLTGRKNEAERYFLKAIQLDPNK), 711 to 744 (GNCYMHYGQFLLEEGRILEAAEMAKKAAELDSSE), 745 to 778 (FDVVFNAAHMLRQASLNEEAEKFYKLAAGLRQNY), and 779 to 812 (PAALMNLGAILHLNGKLEEAEYNYLRALQLKPDD).

It belongs to the TMTC family.

The protein localises to the membrane. Its subcellular location is the endoplasmic reticulum. The enzyme catalyses a di-trans,poly-cis-dolichyl beta-D-mannosyl phosphate + L-seryl-[protein] = 3-O-(alpha-D-mannosyl)-L-seryl-[protein] + a di-trans,poly-cis-dolichyl phosphate + H(+). It carries out the reaction a di-trans,poly-cis-dolichyl beta-D-mannosyl phosphate + L-threonyl-[protein] = 3-O-(alpha-D-mannosyl)-L-threonyl-[protein] + a di-trans,poly-cis-dolichyl phosphate + H(+). Its pathway is protein modification; protein glycosylation. Transfers mannosyl residues to the hydroxyl group of serine or threonine residues. This Xenopus laevis (African clawed frog) protein is Protein O-mannosyl-transferase tmtc2 (tmtc2).